The chain runs to 93 residues: Em protein (93 aa).

A disordered region spans residues 1–93 (MASGQQERSQ…IDESKFKTKS (93 aa)). 3 stretches are compositionally biased toward basic and acidic residues: residues 9–19 (SQLDRKAREGE), 38–52 (AEGR…REQM), and 73–93 (GGDR…KTKS).

Belongs to the small hydrophilic plant seed protein family.

In terms of biological role, it is thought to provide protection for the cytoplasm during the desiccation stage of embryo development. This chain is Em protein (EM), found in Triticum aestivum (Wheat).